A 260-amino-acid chain; its full sequence is Flap endonuclease Xni (260 aa).

Aspartate 109 is a binding site for Mg(2+). The 95-residue stretch at 165 to 259 (VKPSQLADYW…DIRFTGPNKA (95 aa)) folds into the 5'-3' exonuclease domain. K(+) contacts are provided by leucine 176, proline 185, valine 187, and isoleucine 190. The segment at 189-194 (GIGPKA) is interaction with DNA.

Belongs to the Xni family. The cofactor is Mg(2+). K(+) serves as cofactor.

Has flap endonuclease activity. During DNA replication, flap endonucleases cleave the 5'-overhanging flap structure that is generated by displacement synthesis when DNA polymerase encounters the 5'-end of a downstream Okazaki fragment. This Vibrio parahaemolyticus serotype O3:K6 (strain RIMD 2210633) protein is Flap endonuclease Xni.